The chain runs to 60 residues: U-scutigerotoxin(02)-Tl4a (60 aa).

Belongs to the scutigerotoxin-02 family. Contains 3 disulfide bonds. As to expression, expressed by the venom gland.

The protein localises to the secreted. The polypeptide is U-scutigerotoxin(02)-Tl4a (Thereuopoda longicornis (Long-legged centipede)).